A 495-amino-acid chain; its full sequence is UPF0371 protein CE2832 (495 aa).

The protein belongs to the UPF0371 family.

This chain is UPF0371 protein CE2832, found in Corynebacterium efficiens (strain DSM 44549 / YS-314 / AJ 12310 / JCM 11189 / NBRC 100395).